Consider the following 922-residue polypeptide: Two-component sensor PprA (922 aa).

Over residues methionine 1–alanine 10 the composition is skewed to low complexity. Residues methionine 1–glycine 22 are disordered. A PAC 1 domain is found at valine 506 to glutamate 558. In terms of domain architecture, PAS spans serine 559–leucine 622. Positions glutamate 632–glutamine 684 constitute a PAC 2 domain. A Histidine kinase domain is found at glycine 697–alanine 916. Histidine 700 bears the Phosphohistidine; by autocatalysis mark.

In terms of processing, autophosphorylated.

The catalysed reaction is ATP + protein L-histidine = ADP + protein N-phospho-L-histidine.. Its function is as follows. Member of the two-component regulatory system PprA/PprB involved in biofilm formation by controlling the expression of many related genes including type IVb pili major subunit flp pilin, adhesin bapA or cupE fimbriae. Functions as a heme sensor histidine kinase which is autophosphorylated at a histidine residue and transfers its phosphate group to PprB. The protein is Two-component sensor PprA of Pseudomonas aeruginosa (strain ATCC 15692 / DSM 22644 / CIP 104116 / JCM 14847 / LMG 12228 / 1C / PRS 101 / PAO1).